The chain runs to 646 residues: Preterminal protein (646 aa).

Positions 357–366 (RLPVRRRRRR) match the Nuclear localization signal motif. S555 bears the O-(5'-phospho-DNA)-serine mark. Residues 619 to 646 (LHADVPLPPLQANPHPPLPPDARPQRTM) are disordered. Residues 624-640 (PLPPLQANPHPPLPPDA) are compositionally biased toward pro residues.

It belongs to the adenoviridae terminal protein family. Heterodimer with the polymerase; this heterodimer binds to bp 9 to 18 of the genome. Interacts with host POU2F1; POU2F1 binds to the auxiliary sequences in the inverted terminal repeats and tethers the pTP-POL heterodimer to the origin DNA thereby participating in the assembly of the pre-initiation complex (POL-TP-DBP-NFIA-POU2F1). Preterminal protein is used to replicate viral genome, upon genomic encapsidation it is processed first into iTP and finally into TP by adenovirus protease.

The protein localises to the host nucleus matrix. In terms of biological role, protein covalently bound to the viral DNA that acts as a primer for viral genomic replication by DNA strand displacement. Assembles on the viral origin of replication in an initiation complex with viral polymerase, DBP, host NFIA and host POU2F1/OCT1. During initiation, the polymerase covalently couples the first dCTP with Ser-580 of pTP. The terminal protein stimulates the template activity over 20 fold compared to protein-free templates. Neo-synthesized viral genomes are linked to two preterminal proteins, one for each 5' end. These new genomes are encapsidated in the nucleus, and during capsid maturation by viral protease, preterminal protein is first cleaved into intermediary (iTP), then into mature TP. May play a role in host nuclear matrix localization of genomic DNA. The sequence is that of Preterminal protein from Homo sapiens (Human).